Here is a 482-residue protein sequence, read N- to C-terminus: Probable cytosol aminopeptidase (482 aa).

The Mn(2+) site is built by K251 and D256. The active site involves K263. Positions 274, 333, and 335 each coordinate Mn(2+). The active site involves R337.

The protein belongs to the peptidase M17 family. Mn(2+) serves as cofactor.

The protein localises to the cytoplasm. It carries out the reaction Release of an N-terminal amino acid, Xaa-|-Yaa-, in which Xaa is preferably Leu, but may be other amino acids including Pro although not Arg or Lys, and Yaa may be Pro. Amino acid amides and methyl esters are also readily hydrolyzed, but rates on arylamides are exceedingly low.. The catalysed reaction is Release of an N-terminal amino acid, preferentially leucine, but not glutamic or aspartic acids.. In terms of biological role, presumably involved in the processing and regular turnover of intracellular proteins. Catalyzes the removal of unsubstituted N-terminal amino acids from various peptides. This is Probable cytosol aminopeptidase from Acinetobacter baumannii (strain SDF).